The following is a 1332-amino-acid chain: Delta-poly-L-ornithine synthetase (1332 aa).

L-ornithine-binding residues include Asp-217, Glu-221, and Thr-304. D-ornithine contacts are provided by Glu-221, Thr-304, Gly-306, and Thr-308. L-ornithine contacts are provided by Val-312 and Ser-313. Ser-313 lines the D-ornithine pocket. The 78-residue stretch at 524 to 601 (QPQNPAEEIL…AIAALMLEQP (78 aa)) folds into the Carrier domain. Ser-560 carries the post-translational modification O-(pantetheine 4'-phosphoryl)serine. The next 6 helical transmembrane spans lie at 629–649 (LVTI…PFFT), 664–684 (AIAL…VLSI), 868–888 (VSAL…FLLV), 908–928 (LYYF…TAVI), 1120–1140 (IVLP…DVID), and 1151–1171 (LVAL…IVAL).

The protein belongs to the ATP-dependent AMP-binding enzyme family. Pantetheine 4'-phosphate serves as cofactor.

Its subcellular location is the cell membrane. The enzyme catalyses n L-ornithine + n ATP + H2O = N(5)-(L-ornithyl)-[N(5)-(L-ornithyl)]n-1 + n AMP + n diphosphate + n H(+). It carries out the reaction n D-ornithine + n ATP + H2O = N(5)-(D-ornithyl)-[N(5)-(D-ornithyl)]n-1 + n AMP + n diphosphate + n H(+). In terms of biological role, catalyzes the polymerization of L-ornithine, generating poly-L-ornithine composed of 7-12 amino acid units joined via isopeptide bonds between the carboxylate and the side chain amine. This polymer exhibits potent antifungal activity and thus may have a potential role in survival benefit for A.baumannii. The reaction occurs via ATP-dependent adenylation of the substrate. Can also adenylate D-ornithine with similar efficiency and thus may produce D-ornithine polymers. The chain is Delta-poly-L-ornithine synthetase from Acinetobacter baumannii (strain AB307-0294).